The primary structure comprises 461 residues: Cysteine--tRNA ligase (461 aa).

Position 30 (Cys30) interacts with Zn(2+). The 'HIGH' region signature appears at 32-42 (VTVYDLCHIGH). Residues Cys211, His236, and Glu240 each coordinate Zn(2+). The short motif at 268-272 (KMSKS) is the 'KMSKS' region element. Lys271 is an ATP binding site.

This sequence belongs to the class-I aminoacyl-tRNA synthetase family. In terms of assembly, monomer. Zn(2+) is required as a cofactor.

It localises to the cytoplasm. The enzyme catalyses tRNA(Cys) + L-cysteine + ATP = L-cysteinyl-tRNA(Cys) + AMP + diphosphate. In Shewanella sp. (strain MR-4), this protein is Cysteine--tRNA ligase.